The following is a 182-amino-acid chain: Nucleosome assembly protein 1-like 5 (182 aa).

The disordered stretch occupies residues 1–71 (MADSENQGPA…APKPKNDFIE (71 aa)). Low complexity-rich tracts occupy residues 7 to 21 (QGPA…AAEA) and 28 to 49 (AEGG…SAAG). A coiled-coil region spans residues 81 to 107 (VLALKKLQKRCDKIEAKFDKEFQALEK). Residues 134 to 182 (LEGEEEEEEEYEDDEEEGEDEEEEEAAAEAAAGAKHDDAHAEMPDDAKK) form a disordered region. A compositionally biased stretch (acidic residues) spans 135–160 (EGEEEEEEEYEDDEEEGEDEEEEEAA). Basic and acidic residues predominate over residues 167-182 (AKHDDAHAEMPDDAKK).

The protein belongs to the nucleosome assembly protein (NAP) family. In terms of tissue distribution, predominantly expressed in brain.

It is found in the nucleus. In Homo sapiens (Human), this protein is Nucleosome assembly protein 1-like 5 (NAP1L5).